Consider the following 150-residue polypeptide: MKVVVQRVKEASVTNDTLNNQIKKGYCLLVGIGQDSTEQDADVIAKKIANARLFEDDNNKLNFNIQQVNGEILSVSQFTLYADVKKGNRPGFSNSKNPDQAVKIYEYFNDALRAYGLTVKTGEFGTHMNVNINNDGPVTIIYESQDGKIQ.

Positions 136-137 (GP) match the Gly-cisPro motif, important for rejection of L-amino acids motif.

Belongs to the DTD family. In terms of assembly, homodimer.

It localises to the cytoplasm. It carries out the reaction glycyl-tRNA(Ala) + H2O = tRNA(Ala) + glycine + H(+). The enzyme catalyses a D-aminoacyl-tRNA + H2O = a tRNA + a D-alpha-amino acid + H(+). Functionally, an aminoacyl-tRNA editing enzyme that deacylates mischarged D-aminoacyl-tRNAs. Also deacylates mischarged glycyl-tRNA(Ala), protecting cells against glycine mischarging by AlaRS. Acts via tRNA-based rather than protein-based catalysis; rejects L-amino acids rather than detecting D-amino acids in the active site. By recycling D-aminoacyl-tRNA to D-amino acids and free tRNA molecules, this enzyme counteracts the toxicity associated with the formation of D-aminoacyl-tRNA entities in vivo and helps enforce protein L-homochirality. This Staphylococcus aureus (strain bovine RF122 / ET3-1) protein is D-aminoacyl-tRNA deacylase.